We begin with the raw amino-acid sequence, 517 residues long: MLRFLAPRLLSLQGRTARYSSAAALPSPILNPDIPYNQLFINNEWQDAVSKKTFPTVNPTTGEVIGHVAEGDRADVDRAVKAAREAFRLGSPWRRMDASERGRLLNRLADLVERDRVYLASLETLDNGKPFQESYALDLDEVIKVYRYFAGWADKWHGKTIPMDGQHFCFTRHEPVGVCGQIIPWNFPLVMQGWKLAPALATGNTVVMKVAEQTPLSALYLASLIKEAGFPPGVVNIITGYGPTAGAAIAQHVDVDKVAFTGSTEVGHLIQKAAGDSNLKRVTLELGGKSPSIVLADADMEHAVEQCHEALFFNMGQCCCAGSRTFVEESIYNEFLERTVEKAKQRKVGNPFELDTQQGPQVDKEQFERVLGYIQLGQKEGAKLLCGGERFGERGFFIKPTVFGGVQDDMRIAKEEIFGPVQPLFKFKKIEEVVERANNTRYGLAAAVFTRDLDKAMYFTQALQAGTVWVNTYNIVTCHTPFGGFKESGNGRELGEDGLKAYTEVKTVTIKVPQKNS.

The transit peptide at 1-17 (MLRFLAPRLLSLQGRTA) directs the protein to the mitochondrion. Residue K51 is modified to N6-acetyllysine. Position 52 is an N6-acetyllysine; alternate (K52). Residue K52 is modified to N6-succinyllysine; alternate. The residue at position 81 (K81) is an N6-succinyllysine. 262 to 267 (GSTEVG) contributes to the NAD(+) binding site. The active-site Proton acceptor is the E285. The active-site Nucleophile is the C319. K364, K383, K399, K414, and K426 each carry N6-acetyllysine; alternate. 5 positions are modified to N6-succinyllysine; alternate: K364, K383, K399, K414, and K426. K429 carries the post-translational modification N6-acetyllysine.

The protein belongs to the aldehyde dehydrogenase family. In terms of assembly, homotetramer. In terms of tissue distribution, liver, testis and to a lesser extent in brain.

The protein resides in the mitochondrion matrix. It catalyses the reaction an aldehyde + NAD(+) + H2O = a carboxylate + NADH + 2 H(+). The protein operates within alcohol metabolism; ethanol degradation; acetate from ethanol: step 2/2. Its function is as follows. ALDHs play a major role in the detoxification of alcohol-derived acetaldehyde. They are involved in the metabolism of corticosteroids, biogenic amines, neurotransmitters, and lipid peroxidation. The sequence is that of Aldehyde dehydrogenase X, mitochondrial (ALDH1B1) from Homo sapiens (Human).